A 239-amino-acid chain; its full sequence is DNA repair protein RecO (239 aa).

This sequence belongs to the RecO family.

Involved in DNA repair and RecF pathway recombination. This Bifidobacterium longum (strain DJO10A) protein is DNA repair protein RecO.